A 189-amino-acid polypeptide reads, in one-letter code: Fine tangled pili major subunit (189 aa).

It belongs to the Dps family. As to quaternary structure, hexamer.

It is found in the fimbrium. May contribute to bacterial adherence, or be involved in the protection of the bacteria, or both. The sequence is that of Fine tangled pili major subunit (ftpA) from Haemophilus ducreyi (strain 35000HP / ATCC 700724).